Reading from the N-terminus, the 117-residue chain is MEFGLSWVFLVAIIKGVQCQVQLVESGGGLVKPGGSLRLSCAASGFTFSDYYMSWIRQAPGKGLEWVSYISSSSSYTNYADSVKGRFTISRDNAKNSLYLQMNSLRAEDTAVYYCAR.

The N-terminal stretch at 1-19 is a signal peptide; the sequence is MEFGLSWVFLVAIIKGVQC. At glutamine 20 the chain carries Pyrrolidone carboxylic acid. Residues 20–44 are framework-1; sequence QVQLVESGGGLVKPGGSLRLSCAAS. The region spanning 20 to 117 is the Ig-like domain; sequence QVQLVESGGG…EDTAVYYCAR (98 aa). Residues cysteine 41 and cysteine 115 are joined by a disulfide bond. The tract at residues 45–52 is complementarity-determining-1; that stretch reads GFTFSDYY. The segment at 53–69 is framework-2; sequence MSWIRQAPGKGLEWVSY. Residues 70–77 are complementarity-determining-2; the sequence is ISSSSSYT. A framework-3 region spans residues 78–115; it reads NYADSVKGRFTISRDNAKNSLYLQMNSLRAEDTAVYYC. The tract at residues 116-117 is complementarity-determining-3; sequence AR.

In terms of assembly, immunoglobulins are composed of two identical heavy chains and two identical light chains; disulfide-linked.

The protein resides in the secreted. Its subcellular location is the cell membrane. In terms of biological role, v region of the variable domain of immunoglobulin heavy chains that participates in the antigen recognition. Immunoglobulins, also known as antibodies, are membrane-bound or secreted glycoproteins produced by B lymphocytes. In the recognition phase of humoral immunity, the membrane-bound immunoglobulins serve as receptors which, upon binding of a specific antigen, trigger the clonal expansion and differentiation of B lymphocytes into immunoglobulins-secreting plasma cells. Secreted immunoglobulins mediate the effector phase of humoral immunity, which results in the elimination of bound antigens. The antigen binding site is formed by the variable domain of one heavy chain, together with that of its associated light chain. Thus, each immunoglobulin has two antigen binding sites with remarkable affinity for a particular antigen. The variable domains are assembled by a process called V-(D)-J rearrangement and can then be subjected to somatic hypermutations which, after exposure to antigen and selection, allow affinity maturation for a particular antigen. The protein is Immunoglobulin heavy variable 3-11 of Homo sapiens (Human).